A 273-amino-acid polypeptide reads, in one-letter code: MLKERLENVRGTNPLIHNITNYVTVNDCANILLACGASPIMADDIGEVEEITSICRGLNINIGTLNENTIESMLKAGKMANKLKHPVILDPVGVGASKLRRQTALKLLEEVKFTVIRGNISEIKVLALGQGITKGVDADVNDKVKDDTLDNVINFAKGFSKKTGAVIAITGAIDIIANESKAYVVRNGNPNMSKITGTGCMLSAMTAAYISANVDSPLEATLASVCAMGICGELAYNRLSKRDGNSSYRNYIIDEVFNLDGDKLDDAARYESY.

M41 provides a ligand contact to substrate. The ATP site is built by R117 and T170. G197 contacts substrate.

It belongs to the Thz kinase family. Requires Mg(2+) as cofactor.

The enzyme catalyses 5-(2-hydroxyethyl)-4-methylthiazole + ATP = 4-methyl-5-(2-phosphooxyethyl)-thiazole + ADP + H(+). The protein operates within cofactor biosynthesis; thiamine diphosphate biosynthesis; 4-methyl-5-(2-phosphoethyl)-thiazole from 5-(2-hydroxyethyl)-4-methylthiazole: step 1/1. Its function is as follows. Catalyzes the phosphorylation of the hydroxyl group of 4-methyl-5-beta-hydroxyethylthiazole (THZ). The polypeptide is Hydroxyethylthiazole kinase (Clostridium acetobutylicum (strain ATCC 824 / DSM 792 / JCM 1419 / IAM 19013 / LMG 5710 / NBRC 13948 / NRRL B-527 / VKM B-1787 / 2291 / W)).